A 1150-amino-acid polypeptide reads, in one-letter code: Solute carrier family 12 member 6 (1150 aa).

The Cytoplasmic segment spans residues 1-135; it reads MHPPETTTKM…DEYFDKNLAL (135 aa). The interval 20-66 is disordered; it reads TKIDDIPGLSDTSPDLSSRSSSRVRFSSRESVPETSRSEPMSEMSGA. The segment covering 28–45 has biased composition (low complexity); the sequence is LSDTSPDLSSRSSSRVRF. 2 positions are modified to phosphoserine: Ser32 and Ser120. Residues 136–158 traverse the membrane as a discontinuously helical segment; that stretch reads FEEEMDTRPKVSSLLNRMANYTN. K(+)-binding residues include Ser147 and Ser148. Ser148 carries the post-translational modification Phosphoserine. Asn151 lines the chloride pocket. The Extracellular portion of the chain corresponds to 159–165; the sequence is LTQGAKE. The tract at residues 161 to 181 is disordered; that stretch reads QGAKEHEEAENITEGKKKPTK. The span at 163 to 177 shows a compositional bias: basic and acidic residues; the sequence is AKEHEEAENITEGKK. A helical membrane pass occupies residues 166–188; that stretch reads HEEAENITEGKKKPTKTPQMGTF. Residues 189-211 are Cytoplasmic-facing; it reads MGVYLPCLQNIFGVILFLRLTWV. A helical membrane pass occupies residues 212–245; it reads VGTAGVLQAFAIVLICCCCTMLTAISMSAIATNG. Residues 246–263 are Extracellular-facing; that stretch reads VVPAGGSYFMISRALGPE. 2 helical membrane-spanning segments follow: residues 264-287 and 288-316; these read FGGA…ILGA and IEIF…AMLN. At 317–433 the chain is on the extracellular side; sequence NMRVYGTAFL…FVHNNVTSIQ (117 aa). A disulfide bridge links Cys375 with Cys390. Residues Asn379, Asn398, Asn411, and Asn428 are each glycosylated (N-linked (GlcNAc...) asparagine). An intrachain disulfide couples Cys410 to Cys420. Residues 434–454 traverse the membrane as a helical segment; the sequence is GIPGLASGIITENLWSNYLPK. 3 residues coordinate K(+): Ile443, Thr444, and Asn446. Residues Ile443 and Thr444 each contribute to the chloride site. Residues Leu447 and Trp448 each contribute to the chloride site. Over 455 to 464 the chain is Cytoplasmic; sequence GEIIEKPSAK. A helical transmembrane segment spans residues 465–487; it reads SSDVLGSLNHEYVLVDITTSFTL. Over 488–518 the chain is Extracellular; the sequence is LVGIFFPSVTGIMAGSNRSGDLKDAQKSIPI. A helical transmembrane segment spans residues 519–545; the sequence is GTILAILTTSFVYLSNVVLFGACIEGV. The Cytoplasmic segment spans residues 546 to 568; it reads VLRDKFGDAVKGNLVVGTLSWPS. A run of 2 helical transmembrane segments spans residues 569–589 and 590–612; these read PWVI…QSLT and GAPR…VFGH. Ile603 is a binding site for chloride. Residues 613–629 are Cytoplasmic-facing; that stretch reads SKANGEPTWALLLTAAI. Helical transmembrane passes span 630–649 and 650–665; these read AELG…LSMF and FLMC…ALQT. The Cytoplasmic segment spans residues 666 to 1150; it reads LLRTPNWRPR…GGSEVITIYS (485 aa). Residues 682 to 691 form a scissor helix region; it reads ALSFMGMSIC. Phosphoserine is present on Ser736. Thr778 carries the phosphothreonine modification. Position 981 is a phosphoserine (Ser981). Thr991 is modified (phosphothreonine; by OXSR1 and STK39). Residues Ser1023, Ser1029, and Ser1032 each carry the phosphoserine modification. Thr1048 carries the phosphothreonine; by OXSR1 and STK39 modification. Phosphotyrosine is present on Tyr1121. The segment at 1133–1150 is interaction with CKB; sequence ERVLLVRGGGSEVITIYS.

It belongs to the SLC12A transporter family. K/Cl co-transporter subfamily. Homodimer; adopts a domain-swap conformation at the scissor helices connecting the transmembrane domain and C-terminal domain. Heterodimer with K-Cl cotransporter SLC12A5. Interacts (via C-terminus) with CKB; the interaction may be required for potassium-chloride cotransport activity. In terms of processing, phosphorylated, phosphorylation regulates transporter activity. Phosphorylated at Thr-991 and Thr-1048 by OXSR1/OSR1 and STK39/SPAK downstream of WNK kinases (WNK1, WNK2, WNK3 or WNK4), inhibiting the potassium-chloride cotransport activity. N-glycosylated. Expressed in brain (at protein level). Highly expressed in heart, brain and kidney. Detected at lower levels in skeletal muscle, placenta, lung and pancreas. Detected in umbilical vein endothelial cells. In terms of tissue distribution, more abundant in kidney. As to expression, testis specific.

The protein resides in the cell membrane. The protein localises to the basolateral cell membrane. It catalyses the reaction K(+)(in) + chloride(in) = K(+)(out) + chloride(out). Inhibited following phosphorylation by OXSR1/OSR1 and STK39/SPAK: phosphorylation takes place downstream of WNK kinases (WNK1, WNK2, WNK3 or WNK4) in response to hyperosmotic stress and subsequent cell shrinkage. Activated by N-ethylmaleimide (NEM). Inhibited by DIOA, bumetanide and furosemide. Mediates electroneutral potassium-chloride cotransport when activated by cell swelling. May contribute to cell volume homeostasis in single cells. Its function is as follows. Mediates electroneutral potassium-chloride cotransport when activated by cell swelling. May contribute to cell volume homeostasis in single cells. In terms of biological role, mediates electroneutral potassium-chloride cotransport when activated by cell swelling. May contribute to cell volume homeostasis in single cells. The polypeptide is Solute carrier family 12 member 6 (Homo sapiens (Human)).